We begin with the raw amino-acid sequence, 280 residues long: Tritrans,polycis-undecaprenyl-diphosphate synthase (geranylgeranyl-diphosphate specific) (280 aa).

The active site involves Asp-57. Mg(2+) is bound at residue Asp-57. Substrate is bound by residues 58–61 (GNRR), Arg-70, His-74, and 102–104 (STE). Asn-105 serves as the catalytic Proton acceptor. Substrate-binding positions include Phe-106, Arg-108, Arg-229, and 235 to 237 (RIS). Mg(2+) is bound at residue Glu-248.

The protein belongs to the UPP synthase family. In terms of assembly, homodimer. The cofactor is Mg(2+).

It catalyses the reaction geranylgeranyl diphosphate + 7 isopentenyl diphosphate = tri-trans,hepta-cis-undecaprenyl diphosphate + 7 diphosphate. Catalyzes the sequential condensation of isopentenyl diphosphate (IPP) with geranylgeranyl diphosphate (GGPP) to yield (2Z,6Z,10Z,14Z,18Z,22Z,26Z,30E,34E,38E)-undecaprenyl diphosphate (tritrans,heptacis-UPP). It is probably the precursor of glycosyl carrier lipids. This chain is Tritrans,polycis-undecaprenyl-diphosphate synthase (geranylgeranyl-diphosphate specific), found in Methanocaldococcus jannaschii (strain ATCC 43067 / DSM 2661 / JAL-1 / JCM 10045 / NBRC 100440) (Methanococcus jannaschii).